The chain runs to 158 residues: 6,7-dimethyl-8-ribityllumazine synthase (158 aa).

Residues Phe24, 58-60 (AFE), and 82-84 (AVI) each bind 5-amino-6-(D-ribitylamino)uracil. 87 to 88 (GT) serves as a coordination point for (2S)-2-hydroxy-3-oxobutyl phosphate. Residue His90 is the Proton donor of the active site. Residue Phe115 participates in 5-amino-6-(D-ribitylamino)uracil binding. Residue Arg129 coordinates (2S)-2-hydroxy-3-oxobutyl phosphate.

It belongs to the DMRL synthase family. As to quaternary structure, forms an icosahedral capsid composed of 60 subunits, arranged as a dodecamer of pentamers.

The catalysed reaction is (2S)-2-hydroxy-3-oxobutyl phosphate + 5-amino-6-(D-ribitylamino)uracil = 6,7-dimethyl-8-(1-D-ribityl)lumazine + phosphate + 2 H2O + H(+). It functions in the pathway cofactor biosynthesis; riboflavin biosynthesis; riboflavin from 2-hydroxy-3-oxobutyl phosphate and 5-amino-6-(D-ribitylamino)uracil: step 1/2. Its function is as follows. Catalyzes the formation of 6,7-dimethyl-8-ribityllumazine by condensation of 5-amino-6-(D-ribitylamino)uracil with 3,4-dihydroxy-2-butanone 4-phosphate. This is the penultimate step in the biosynthesis of riboflavin. In Azotobacter vinelandii (strain DJ / ATCC BAA-1303), this protein is 6,7-dimethyl-8-ribityllumazine synthase.